The following is a 195-amino-acid chain: TM2 domain-containing protein C41D11.9 (195 aa).

Residues 1–20 (MLHKILFLICLASFIPTIGS) form the signal peptide. Over 21-136 (ISGTKDVKSK…NWSSGYSWTK (116 aa)) the chain is Extracellular. 3 N-linked (GlcNAc...) asparagine glycosylation sites follow: Asn55, Asn93, and Asn127. One can recognise a TM2 domain in the interval 131 to 179 (GYSWTKTMILSVVLGGFGADRFYLGLWKSAIGKLFSFGGLGVWTLVDVV). The chain crosses the membrane as a helical span at residues 137–157 (TMILSVVLGGFGADRFYLGLW). Topologically, residues 158-163 (KSAIGK) are cytoplasmic. The helical transmembrane segment at 164–184 (LFSFGGLGVWTLVDVVLIAVG) threads the bilayer. At 185-195 (YIKPYDGSMYI) the chain is on the extracellular side.

This sequence belongs to the TM2 family.

The protein localises to the membrane. In Caenorhabditis elegans, this protein is TM2 domain-containing protein C41D11.9.